We begin with the raw amino-acid sequence, 80 residues long: UPF0291 protein llmg_1475 (80 aa).

It belongs to the UPF0291 family.

Its subcellular location is the cytoplasm. The protein is UPF0291 protein llmg_1475 of Lactococcus lactis subsp. cremoris (strain MG1363).